The chain runs to 116 residues: UPF0102 protein PERMA_0362 (116 aa).

The protein belongs to the UPF0102 family.

This Persephonella marina (strain DSM 14350 / EX-H1) protein is UPF0102 protein PERMA_0362.